The chain runs to 418 residues: UDP-N-acetylglucosamine 1-carboxyvinyltransferase (418 aa).

Phosphoenolpyruvate is bound at residue 22–23 (KN). Arginine 91 contacts UDP-N-acetyl-alpha-D-glucosamine. Cysteine 115 serves as the catalytic Proton donor. At cysteine 115 the chain carries 2-(S-cysteinyl)pyruvic acid O-phosphothioketal. Positions 303 and 325 each coordinate UDP-N-acetyl-alpha-D-glucosamine.

This sequence belongs to the EPSP synthase family. MurA subfamily.

It localises to the cytoplasm. It catalyses the reaction phosphoenolpyruvate + UDP-N-acetyl-alpha-D-glucosamine = UDP-N-acetyl-3-O-(1-carboxyvinyl)-alpha-D-glucosamine + phosphate. Its pathway is cell wall biogenesis; peptidoglycan biosynthesis. Cell wall formation. Adds enolpyruvyl to UDP-N-acetylglucosamine. The chain is UDP-N-acetylglucosamine 1-carboxyvinyltransferase from Syntrophobacter fumaroxidans (strain DSM 10017 / MPOB).